Consider the following 154-residue polypeptide: MSKIKIFHLFPDDKDIEATQQPESLLVPSKSDSLDSSLSRHHQENQSNRQRNHQHRQQDQELENLQDGSRGKRKWECKDEESPVKIPETPRNSNSVCYCPPRPPRKPKAIPSMKRRGMWVKRSVVFLDVAREVESMFPPSVLQDFGKKIKKARF.

A disordered region spans residues 1–111; it reads MSKIKIFHLF…RPPRKPKAIP (111 aa). Positions 24-37 are enriched in low complexity; it reads SLLVPSKSDSLDSS. The segment covering 74 to 83 has biased composition (basic and acidic residues); it reads KWECKDEESP.

Probable cyclin-dependent protein kinase (CDK) inhibitor that functions as a repressor of mitosis in the endoreduplication cell cycle. The protein is Cyclin-dependent protein kinase inhibitor SMR14 of Arabidopsis thaliana (Mouse-ear cress).